The following is a 132-amino-acid chain: Small ribosomal subunit protein uS8 (132 aa).

The protein belongs to the universal ribosomal protein uS8 family. Part of the 30S ribosomal subunit. Contacts proteins S5 and S12.

One of the primary rRNA binding proteins, it binds directly to 16S rRNA central domain where it helps coordinate assembly of the platform of the 30S subunit. In Caulobacter vibrioides (strain ATCC 19089 / CIP 103742 / CB 15) (Caulobacter crescentus), this protein is Small ribosomal subunit protein uS8.